Reading from the N-terminus, the 321-residue chain is Methionyl-tRNA formyltransferase (321 aa).

111–114 (GLLP) contacts (6S)-5,6,7,8-tetrahydrofolate.

The protein belongs to the Fmt family.

It carries out the reaction L-methionyl-tRNA(fMet) + (6R)-10-formyltetrahydrofolate = N-formyl-L-methionyl-tRNA(fMet) + (6S)-5,6,7,8-tetrahydrofolate + H(+). Functionally, attaches a formyl group to the free amino group of methionyl-tRNA(fMet). The formyl group appears to play a dual role in the initiator identity of N-formylmethionyl-tRNA by promoting its recognition by IF2 and preventing the misappropriation of this tRNA by the elongation apparatus. The polypeptide is Methionyl-tRNA formyltransferase (Chlamydia abortus (strain DSM 27085 / S26/3) (Chlamydophila abortus)).